Reading from the N-terminus, the 437-residue chain is Histidinol dehydrogenase (437 aa).

Residues Tyr-133, Gln-191, and Asn-214 each coordinate NAD(+). Substrate is bound by residues Ser-240, Gln-262, and His-265. Zn(2+) contacts are provided by Gln-262 and His-265. Residues Glu-329 and His-330 each act as proton acceptor in the active site. The substrate site is built by His-330, Asp-363, Glu-417, and His-422. Asp-363 is a binding site for Zn(2+). Residue His-422 coordinates Zn(2+).

The protein belongs to the histidinol dehydrogenase family. In terms of assembly, homodimer. It depends on Zn(2+) as a cofactor.

The enzyme catalyses L-histidinol + 2 NAD(+) + H2O = L-histidine + 2 NADH + 3 H(+). It participates in amino-acid biosynthesis; L-histidine biosynthesis; L-histidine from 5-phospho-alpha-D-ribose 1-diphosphate: step 9/9. Catalyzes the sequential NAD-dependent oxidations of L-histidinol to L-histidinaldehyde and then to L-histidine. This is Histidinol dehydrogenase from Blochmanniella floridana.